The following is a 292-amino-acid chain: MKLARLTPSHIPYYIALMRIDKPIGTLLLLWPTYWALWLANAGMPSLTNFIVFTLGVVIMRSAGCVINDFADRKIDGSVKRTMQRPLVSGQVSSGEAISLFILLITVAFLLVLMLSVNTILLSFGALALAFCYPFMKRYTQLPQVVLGAAFGWAIPMAFMASINALPIQAWLLFIANICWTVAYDTMYAMVDRDDDLKIGVKSTAILFGKYDRHIIGLLNLAFIALMLSIGALNNIGLSYWLGLSVAIVLLVYQQVLIQQRARTDCFKAFLNNHYVGLAFFIGLLFSYPVAF.

Helical transmembrane passes span 24–44 (IGTL…NAGM), 47–67 (LTNF…GCVI), 97–117 (AISL…MLSV), 119–139 (TILL…MKRY), 145–165 (VVLG…SINA), 171–191 (WLLF…YAMV), 214–234 (HIIG…GALN), 238–258 (LSYW…QVLI), and 270–290 (FLNN…SYPV).

This sequence belongs to the UbiA prenyltransferase family. Requires Mg(2+) as cofactor.

Its subcellular location is the cell inner membrane. It carries out the reaction all-trans-octaprenyl diphosphate + 4-hydroxybenzoate = 4-hydroxy-3-(all-trans-octaprenyl)benzoate + diphosphate. It participates in cofactor biosynthesis; ubiquinone biosynthesis. Functionally, catalyzes the prenylation of para-hydroxybenzoate (PHB) with an all-trans polyprenyl group. Mediates the second step in the final reaction sequence of ubiquinone-8 (UQ-8) biosynthesis, which is the condensation of the polyisoprenoid side chain with PHB, generating the first membrane-bound Q intermediate 3-octaprenyl-4-hydroxybenzoate. This Pseudoalteromonas translucida (strain TAC 125) protein is 4-hydroxybenzoate octaprenyltransferase.